We begin with the raw amino-acid sequence, 273 residues long: Ribosomal RNA small subunit methyltransferase A (273 aa).

S-adenosyl-L-methionine contacts are provided by Asn-18, Leu-20, Gly-45, Glu-66, Asp-91, and Asn-113.

The protein belongs to the class I-like SAM-binding methyltransferase superfamily. rRNA adenine N(6)-methyltransferase family. RsmA subfamily.

It is found in the cytoplasm. The catalysed reaction is adenosine(1518)/adenosine(1519) in 16S rRNA + 4 S-adenosyl-L-methionine = N(6)-dimethyladenosine(1518)/N(6)-dimethyladenosine(1519) in 16S rRNA + 4 S-adenosyl-L-homocysteine + 4 H(+). Functionally, specifically dimethylates two adjacent adenosines (A1518 and A1519) in the loop of a conserved hairpin near the 3'-end of 16S rRNA in the 30S particle. May play a critical role in biogenesis of 30S subunits. The sequence is that of Ribosomal RNA small subunit methyltransferase A from Shigella boydii serotype 18 (strain CDC 3083-94 / BS512).